A 256-amino-acid polypeptide reads, in one-letter code: Trans-aconitate 2-methyltransferase (256 aa).

This sequence belongs to the methyltransferase superfamily. Tam family.

The protein resides in the cytoplasm. It catalyses the reaction trans-aconitate + S-adenosyl-L-methionine = (E)-3-(methoxycarbonyl)pent-2-enedioate + S-adenosyl-L-homocysteine. Functionally, catalyzes the S-adenosylmethionine monomethyl esterification of trans-aconitate. This chain is Trans-aconitate 2-methyltransferase, found in Afipia carboxidovorans (strain ATCC 49405 / DSM 1227 / KCTC 32145 / OM5) (Oligotropha carboxidovorans).